A 324-amino-acid chain; its full sequence is NAD kinase (324 aa).

Asp89 functions as the Proton acceptor in the catalytic mechanism. Residues 89-90 (DG), Arg94, 163-164 (NE), Asp193, and 204-209 (TAYAFS) contribute to the NAD(+) site.

This sequence belongs to the NAD kinase family. A divalent metal cation serves as cofactor.

The protein localises to the cytoplasm. The enzyme catalyses NAD(+) + ATP = ADP + NADP(+) + H(+). Its function is as follows. Involved in the regulation of the intracellular balance of NAD and NADP, and is a key enzyme in the biosynthesis of NADP. Catalyzes specifically the phosphorylation on 2'-hydroxyl of the adenosine moiety of NAD to yield NADP. This Nocardia farcinica (strain IFM 10152) protein is NAD kinase.